Here is a 366-residue protein sequence, read N- to C-terminus: Ribosomal RNA large subunit methyltransferase M (366 aa).

S-adenosyl-L-methionine contacts are provided by residues serine 188, 221-224 (CPGG), aspartate 240, aspartate 260, and aspartate 277. The active-site Proton acceptor is lysine 306.

This sequence belongs to the class I-like SAM-binding methyltransferase superfamily. RNA methyltransferase RlmE family. RlmM subfamily. Monomer.

The protein localises to the cytoplasm. It catalyses the reaction cytidine(2498) in 23S rRNA + S-adenosyl-L-methionine = 2'-O-methylcytidine(2498) in 23S rRNA + S-adenosyl-L-homocysteine + H(+). Its function is as follows. Catalyzes the 2'-O-methylation at nucleotide C2498 in 23S rRNA. In Shigella dysenteriae serotype 1 (strain Sd197), this protein is Ribosomal RNA large subunit methyltransferase M.